The chain runs to 346 residues: uncharacterized protein (346 aa).

This is an uncharacterized protein from Mycoplasma pneumoniae (strain ATCC 29342 / M129 / Subtype 1) (Mycoplasmoides pneumoniae).